A 287-amino-acid polypeptide reads, in one-letter code: Inorganic pyrophosphatase (287 aa).

Arginine 79 contacts diphosphate. Positions 116, 121, and 153 each coordinate Mg(2+).

The protein belongs to the PPase family. It depends on Mg(2+) as a cofactor.

Its subcellular location is the cytoplasm. The enzyme catalyses diphosphate + H2O = 2 phosphate + H(+). In Eremothecium gossypii (strain ATCC 10895 / CBS 109.51 / FGSC 9923 / NRRL Y-1056) (Yeast), this protein is Inorganic pyrophosphatase (IPP1).